Reading from the N-terminus, the 188-residue chain is Putative adenylate kinase (188 aa).

ATP is bound by residues G10, G12, K13, S14, and T15. The tract at residues H30–I53 is NMP. An LID region spans residues R103–E113. ATP-binding residues include R104 and K142.

It belongs to the adenylate kinase family. AK6 subfamily. In terms of assembly, interacts with uS11. Not a structural component of 40S pre-ribosomes, but transiently interacts with them by binding to uS11.

It catalyses the reaction AMP + ATP = 2 ADP. The enzyme catalyses ATP + H2O = ADP + phosphate + H(+). Functionally, broad-specificity nucleoside monophosphate (NMP) kinase that catalyzes the reversible transfer of the terminal phosphate group between nucleoside triphosphates and monophosphates. Also has ATPase activity. Involved in the late maturation steps of the 30S ribosomal particles, specifically 16S rRNA maturation. While NMP activity is not required for ribosome maturation, ATPase activity is. Associates transiently with small ribosomal subunit protein uS11. ATP hydrolysis breaks the interaction with uS11. May temporarily remove uS11 from the ribosome to enable a conformational change of the ribosomal RNA that is needed for the final maturation step of the small ribosomal subunit. In Sulfurisphaera tokodaii (strain DSM 16993 / JCM 10545 / NBRC 100140 / 7) (Sulfolobus tokodaii), this protein is Putative adenylate kinase.